A 251-amino-acid chain; its full sequence is 2,3-bisphosphoglycerate-dependent phosphoglycerate mutase (251 aa).

Residues 7–14 (RHGESEWN), 20–21 (TG), Arg-59, 86–89 (ERHY), Lys-97, 113–114 (RR), and 186–187 (GN) contribute to the substrate site. His-8 serves as the catalytic Tele-phosphohistidine intermediate. The active-site Proton donor/acceptor is the Glu-86.

The protein belongs to the phosphoglycerate mutase family. BPG-dependent PGAM subfamily.

It carries out the reaction (2R)-2-phosphoglycerate = (2R)-3-phosphoglycerate. The protein operates within carbohydrate degradation; glycolysis; pyruvate from D-glyceraldehyde 3-phosphate: step 3/5. Its function is as follows. Catalyzes the interconversion of 2-phosphoglycerate and 3-phosphoglycerate. The polypeptide is 2,3-bisphosphoglycerate-dependent phosphoglycerate mutase (Treponema pallidum (strain Nichols)).